The primary structure comprises 279 residues: Octanoyl-[GcvH]:protein N-octanoyltransferase (279 aa).

Residues 48–253 (ETSPPVIRLW…TLEKLSDEIV (206 aa)) form the BPL/LPL catalytic domain. Cys152 acts as the Acyl-thioester intermediate in catalysis.

This sequence belongs to the octanoyltransferase LipL family.

The catalysed reaction is N(6)-octanoyl-L-lysyl-[glycine-cleavage complex H protein] + L-lysyl-[lipoyl-carrier protein] = N(6)-octanoyl-L-lysyl-[lipoyl-carrier protein] + L-lysyl-[glycine-cleavage complex H protein]. The protein operates within protein modification; protein lipoylation via endogenous pathway; protein N(6)-(lipoyl)lysine from octanoyl-[acyl-carrier-protein]. Catalyzes the amidotransfer (transamidation) of the octanoyl moiety from octanoyl-GcvH to the lipoyl domain of the E2 subunit of lipoate-dependent enzymes. The protein is Octanoyl-[GcvH]:protein N-octanoyltransferase of Oceanobacillus iheyensis (strain DSM 14371 / CIP 107618 / JCM 11309 / KCTC 3954 / HTE831).